The primary structure comprises 178 residues: Ribosome maturation factor RimM (178 aa).

Positions 101–178 (ADEYYWYQLV…VMRVEWDADF (78 aa)) constitute a PRC barrel domain.

It belongs to the RimM family. As to quaternary structure, binds ribosomal protein uS19.

It localises to the cytoplasm. Functionally, an accessory protein needed during the final step in the assembly of 30S ribosomal subunit, possibly for assembly of the head region. Essential for efficient processing of 16S rRNA. May be needed both before and after RbfA during the maturation of 16S rRNA. It has affinity for free ribosomal 30S subunits but not for 70S ribosomes. This chain is Ribosome maturation factor RimM, found in Pseudomonas putida (strain ATCC 47054 / DSM 6125 / CFBP 8728 / NCIMB 11950 / KT2440).